We begin with the raw amino-acid sequence, 314 residues long: tRNA pseudouridine synthase B (314 aa).

His43 is a binding site for substrate. Residue Asp48 is the Nucleophile of the active site. Tyr76, Tyr179, and Leu200 together coordinate substrate.

Belongs to the pseudouridine synthase TruB family. Type 1 subfamily.

The catalysed reaction is uridine(55) in tRNA = pseudouridine(55) in tRNA. In terms of biological role, responsible for synthesis of pseudouridine from uracil-55 in the psi GC loop of transfer RNAs. In Salmonella choleraesuis (strain SC-B67), this protein is tRNA pseudouridine synthase B.